Here is a 165-residue protein sequence, read N- to C-terminus: Phosphopantetheine adenylyltransferase (165 aa).

Position 10 (S10) interacts with substrate. ATP contacts are provided by residues 10 to 11 and H18; that span reads SF. 3 residues coordinate substrate: K42, T79, and R93. Residues 94-96, E104, and 129-135 contribute to the ATP site; these read GLR and VRPITAT.

It belongs to the bacterial CoaD family. Homohexamer. Mg(2+) is required as a cofactor.

The protein resides in the cytoplasm. It catalyses the reaction (R)-4'-phosphopantetheine + ATP + H(+) = 3'-dephospho-CoA + diphosphate. The protein operates within cofactor biosynthesis; coenzyme A biosynthesis; CoA from (R)-pantothenate: step 4/5. Its function is as follows. Reversibly transfers an adenylyl group from ATP to 4'-phosphopantetheine, yielding dephospho-CoA (dPCoA) and pyrophosphate. The protein is Phosphopantetheine adenylyltransferase of Afipia carboxidovorans (strain ATCC 49405 / DSM 1227 / KCTC 32145 / OM5) (Oligotropha carboxidovorans).